The sequence spans 337 residues: Glyceraldehyde-3-phosphate dehydrogenase (337 aa).

Residues 12–13, Asp-34, and Lys-79 each bind NAD(+); that span reads RI. D-glyceraldehyde 3-phosphate contacts are provided by residues 150 to 152, Thr-181, 210 to 211, and Arg-233; these read SCT and TG. Cys-151 serves as the catalytic Nucleophile. Residue Asn-315 coordinates NAD(+).

This sequence belongs to the glyceraldehyde-3-phosphate dehydrogenase family. Homotetramer.

The protein resides in the cytoplasm. The enzyme catalyses D-glyceraldehyde 3-phosphate + phosphate + NAD(+) = (2R)-3-phospho-glyceroyl phosphate + NADH + H(+). Its pathway is carbohydrate degradation; glycolysis; pyruvate from D-glyceraldehyde 3-phosphate: step 1/5. In Schizophyllum commune (Split gill fungus), this protein is Glyceraldehyde-3-phosphate dehydrogenase (GPD).